Here is a 237-residue protein sequence, read N- to C-terminus: uncharacterized protein (237 aa).

This is an uncharacterized protein from Methanocaldococcus jannaschii (strain ATCC 43067 / DSM 2661 / JAL-1 / JCM 10045 / NBRC 100440) (Methanococcus jannaschii).